Consider the following 103-residue polypeptide: Protamine-2 (103 aa).

Positions 1-103 are disordered; sequence MVRYRMRSLS…RTRRRRCRRH (103 aa). Residues serine 8 and serine 10 each carry the phosphoserine modification. Residues 8-17 are compositionally biased toward basic and acidic residues; sequence SLSERPHEVH. The span at 18–29 shows a compositional bias: low complexity; that stretch reads GQQVHGQDQGHN. The segment covering 48 to 103 has biased composition (basic residues); it reads HRGHSHHRRRRCSRRRLHRIHRRRHRSCRRRRRRSCRHRRRHRRGCRTRRRRCRRH.

The protein belongs to the protamine P2 family. In terms of assembly, interacts with TDRP. In terms of processing, proteolytic processing into mature chains is required for histone eviction during spermatogenesis. Transition proteins (TNP1 and TNP2) are required for processing. As to expression, testis.

The protein resides in the nucleus. It is found in the chromosome. Its function is as follows. Protamines substitute for histones in the chromatin of sperm during the haploid phase of spermatogenesis. They compact sperm DNA into a highly condensed, stable and inactive complex. The protein is Protamine-2 (PRM2) of Macaca nemestrina (Pig-tailed macaque).